The following is a 95-amino-acid chain: Citrate lyase acyl carrier protein (95 aa).

An O-(phosphoribosyl dephospho-coenzyme A)serine modification is found at S14.

This sequence belongs to the CitD family. Oligomer with a subunit composition of (alpha,beta,gamma)6.

It is found in the cytoplasm. Its function is as follows. Covalent carrier of the coenzyme of citrate lyase. The polypeptide is Citrate lyase acyl carrier protein (Haemophilus influenzae (strain PittGG)).